Reading from the N-terminus, the 555-residue chain is Chaperonin GroEL (555 aa).

ATP-binding positions include threonine 29–proline 32, lysine 50, aspartate 86–threonine 90, glycine 418, and aspartate 499. Residues histidine 528–phenylalanine 555 are disordered. Residues arginine 537–phenylalanine 555 are compositionally biased toward gly residues.

It belongs to the chaperonin (HSP60) family. As to quaternary structure, forms a cylinder of 14 subunits composed of two heptameric rings stacked back-to-back. Interacts with the co-chaperonin GroES.

Its subcellular location is the cytoplasm. The catalysed reaction is ATP + H2O + a folded polypeptide = ADP + phosphate + an unfolded polypeptide.. Together with its co-chaperonin GroES, plays an essential role in assisting protein folding. The GroEL-GroES system forms a nano-cage that allows encapsulation of the non-native substrate proteins and provides a physical environment optimized to promote and accelerate protein folding. The sequence is that of Chaperonin GroEL from Orientia tsutsugamushi (Rickettsia tsutsugamushi).